The sequence spans 493 residues: Alpha-amylase-related protein (493 aa).

The signal sequence occupies residues 1–19 (MFKFALALTLCLAGSLSLA). The residue at position 20 (glutamine 20) is a Pyrrolidone carboxylic acid. Cysteine 47 and cysteine 103 form a disulfide bridge. 3 residues coordinate Ca(2+): asparagine 117, glutamine 168, and aspartate 177. Cysteine 156 and cysteine 170 are joined by a disulfide. Residue arginine 205 coordinates chloride. The Nucleophile role is filled by aspartate 207. Position 211 (histidine 211) interacts with Ca(2+). The Proton donor role is filled by glutamate 244. Residues asparagine 307 and arginine 342 each coordinate chloride. Cystine bridges form between cysteine 375–cysteine 381, cysteine 417–cysteine 440, and cysteine 447–cysteine 459.

This sequence belongs to the glycosyl hydrolase 13 family. Monomer. Requires Ca(2+) as cofactor. The cofactor is chloride.

The protein localises to the secreted. The catalysed reaction is Endohydrolysis of (1-&gt;4)-alpha-D-glucosidic linkages in polysaccharides containing three or more (1-&gt;4)-alpha-linked D-glucose units.. In Drosophila elegans (Fruit fly), this protein is Alpha-amylase-related protein (Amyrel).